Reading from the N-terminus, the 349-residue chain is Protein BPS1, chloroplastic (349 aa).

A chloroplast-targeting transit peptide spans 1 to 43 (MARPQDPPRGFFPFGNPFKNLSSKNSVLSSKLLPLLNNFETNL).

In terms of tissue distribution, expressed in roots, hypocotyls, cotyledons, leaves, flowers and siliques.

It localises to the plastid. Its subcellular location is the chloroplast. Its function is as follows. Required for normal root and shoot development. Prevents constitutive production of a root mobile carotenoid-derived signaling compound that is capable of arresting shoot and leaf development. The protein is Protein BPS1, chloroplastic of Arabidopsis thaliana (Mouse-ear cress).